Reading from the N-terminus, the 603-residue chain is UvrABC system protein C (603 aa).

The 78-residue stretch at Asp-15–Ile-92 folds into the GIY-YIG domain. The UVR domain occupies Lys-197 to Thr-232.

Belongs to the UvrC family. Interacts with UvrB in an incision complex.

It localises to the cytoplasm. The UvrABC repair system catalyzes the recognition and processing of DNA lesions. UvrC both incises the 5' and 3' sides of the lesion. The N-terminal half is responsible for the 3' incision and the C-terminal half is responsible for the 5' incision. The protein is UvrABC system protein C of Listeria innocua serovar 6a (strain ATCC BAA-680 / CLIP 11262).